The primary structure comprises 695 residues: Segment polarity protein dishevelled homolog DVL-1 (695 aa).

The DIX domain occupies 1–85; that stretch reads MAETKIIYHM…RVVSWLVLAE (85 aa). A disordered region spans residues 89-235; that stretch reads SDAGSQGTDS…QRLRQTDRAS (147 aa). Basic residues predominate over residues 142–151; sequence SHRRERARRR. The span at 152–171 shows a compositional bias: basic and acidic residues; the sequence is NRDEAARTNGHPRGDRRRDL. Residues 177–192 are compositionally biased toward low complexity; the sequence is SASTVLSSELESSSFI. Position 194 is a phosphoserine (S194). Positions 201-214 are enriched in low complexity; the sequence is SRLSSSTEQSTSSR. Over residues 215–228 the composition is skewed to basic residues; that stretch reads LVRKHKCRRRKQRL. In terms of domain architecture, PDZ spans 251–323; sequence TVTLNMERHH…NDDAVRVLRE (73 aa). A DEP domain is found at 425-499; the sequence is PDSGLEIRDR…SEQCYYVFGD (75 aa). A compositionally biased stretch (low complexity) spans 559–580; that stretch reads SCGSGSAGSQQSEGSKSSGSTR. The tract at residues 559-641 is disordered; the sequence is SCGSGSAGSQ…SQASAVAPGL (83 aa). Polar residues predominate over residues 622–635; that stretch reads SQLSRGSSPRSQAS.

This sequence belongs to the DSH family. In terms of assembly, interacts with CXXC4. Interacts (via PDZ domain) with TMEM88. Interacts with BRD7 and INVS. Interacts (via PDZ domain) with VANGL1 and VANGL2 (via C-terminus). Interacts (via PDZ domain) with NXN. Interacts with ARRB1; the interaction is enhanced by phosphorylation of DVL1. Interacts with CYLD. Interacts (via PDZ domain) with RYK. Self-associates (via DIX domain) and forms higher homooligomers. Interacts (via PDZ domain) with DACT1 and FZD7, where DACT1 and FZD7 compete for the same binding site. Interacts (via DEP domain) with MUSK; the interaction is direct and mediates the formation a DVL1, MUSK and PAK1 ternary complex involved in AChR clustering. Interacts with DCDC2. Interacts with FOXK2. Interacts with PKD1 (via extracellular domain). Interacts (via PDZ domain) with CCDC88C/DAPLE; competes with CCDC88C for binding to frizzled receptor FZD7 and dissociates from CCDC88C following initiation of non-canonical Wnt signaling when CCDC88C displaces DVL1 from ligand-activated FZD7. Ubiquitinated; undergoes both 'Lys-48'-linked ubiquitination, leading to its subsequent degradation by the ubiquitin-proteasome pathway, and 'Lys-63'-linked ubiquitination. The interaction with INVS is required for ubiquitination. Deubiquitinated by CYLD, which acts on 'Lys-63'-linked ubiquitin chains. High levels are seen in the brain, testis and kidney, lower levels in the ovary, breast, muscle, liver and small intestine, and very low levels are seen in the spleen and thymus. A moderate level expression is seen in the heart.

It localises to the cell membrane. It is found in the cytoplasm. The protein resides in the cytosol. Its subcellular location is the cytoplasmic vesicle. Functionally, participates in Wnt signaling by binding to the cytoplasmic C-terminus of frizzled family members and transducing the Wnt signal to down-stream effectors. Plays a role both in canonical and non-canonical Wnt signaling. Plays a role in the signal transduction pathways mediated by multiple Wnt genes. Required for LEF1 activation upon WNT1 and WNT3A signaling. DVL1 and PAK1 form a ternary complex with MUSK which is important for MUSK-dependent regulation of AChR clustering during the formation of the neuromuscular junction (NMJ). The polypeptide is Segment polarity protein dishevelled homolog DVL-1 (Dvl1) (Mus musculus (Mouse)).